The primary structure comprises 57 residues: uncharacterized protein (57 aa).

The chain crosses the membrane as a helical span at residues 34 to 54 (AALLDAAALVVIPGLLTAAAV).

Its subcellular location is the membrane. This is an uncharacterized protein from Dictyostelium discoideum (Social amoeba).